The following is a 150-amino-acid chain: Large ribosomal subunit protein bL9 (150 aa).

Belongs to the bacterial ribosomal protein bL9 family.

Functionally, binds to the 23S rRNA. The polypeptide is Large ribosomal subunit protein bL9 (Streptococcus mutans serotype c (strain ATCC 700610 / UA159)).